A 221-amino-acid chain; its full sequence is MEPLTHPLLDEATVSQLRATLLADETSWQDGRKTAGYQAAEVKNNLQLDRNSKTAKENSQLVIKQLESDPLVKSFALPRHIHGVMFSRSGIGQGYGMHVDNAYMSSGRSDLSFTLFLNEPESYEGGALCIQTLQDSKQVKLPAGQVIIYPSTSLHAVETVTAGERLVCVGWIQSYISSNEDRTILFGLNAGARALLAEHGRSPELDLIFQAYTNLLRRLGS.

Residues 80 to 174 (HIHGVMFSRS…RLVCVGWIQS (95 aa)) enclose the Fe2OG dioxygenase domain. 3 residues coordinate Fe cation: His-98, Asp-100, and His-155. Arg-165 provides a ligand contact to 2-oxoglutarate.

Requires Fe(2+) as cofactor. The cofactor is L-ascorbate.

The protein is PKHD-type hydroxylase PMT_0286 of Prochlorococcus marinus (strain MIT 9313).